Consider the following 356-residue polypeptide: Heparan sulfate 2-O-sulfotransferase 1 (356 aa).

The Cytoplasmic segment spans residues 1 to 11 (MGLLRIMLPPK). Residues 12-28 (LQLLAVLVFGVAVLFLE) form a helical; Signal-anchor for type II membrane protein membrane-spanning segment. A coiled-coil region spans residues 24–51 (VLFLENQIQKLEESRGKLERAIARHEVR). Topologically, residues 29 to 356 (NQIQKLEESR…FYEKIYPKSN (328 aa)) are lumenal. The adenosine 3',5'-bisphosphate site is built by lysine 83, threonine 84, alanine 85, serine 86, threonine 87, and serine 88. 2 N-linked (GlcNAc...) asparagine glycosylation sites follow: asparagine 108 and asparagine 127. Catalysis depends on residues histidine 140 and histidine 142. Adenosine 3',5'-bisphosphate-binding residues include arginine 164 and serine 172. Intrachain disulfides connect cysteine 201-cysteine 209 and cysteine 222-cysteine 228. Positions 279, 285, 290, and 293 each coordinate adenosine 3',5'-bisphosphate.

Belongs to the sulfotransferase 3 family. In terms of assembly, homotrimer. In terms of tissue distribution, expressed in heart, limb, head and trunk. At stages 20 and 24, it is expressed in the most regions of the first and second pharyngeal arche. In both wing and leg buds, it is detected at the overlying ectoderm and mesenchyme throughout stages 21, 23 and 24.

Its subcellular location is the golgi apparatus membrane. Catalyzes the transfer of a sulfo group from 3'-phospho-5'-adenylyl sulfate (PAPS) to the 2-OH position of iduronic acid (IdoA) or glucuronic acid (GlcA) within the heparan sulfate (HS) chain and participates in HS biosynthesis. This Gallus gallus (Chicken) protein is Heparan sulfate 2-O-sulfotransferase 1.